Reading from the N-terminus, the 115-residue chain is U3-lycotoxin-Ls1q (115 aa).

A signal peptide spans 1 to 20; the sequence is MKFVLLFGVLLVTLFSYSSA. A propeptide spanning residues 21-44 is cleaved from the precursor; the sequence is EMFDDFDQADEDELLSLIEKEEAR. 4 disulfide bridges follow: Cys48–Cys63, Cys55–Cys72, Cys62–Cys87, and Cys74–Cys85.

This sequence belongs to the neurotoxin 19 (CSTX) family. 01 subfamily. In terms of tissue distribution, expressed by the venom gland.

It is found in the secreted. The chain is U3-lycotoxin-Ls1q from Lycosa singoriensis (Wolf spider).